A 1038-amino-acid chain; its full sequence is DNA polymerase delta catalytic subunit (1038 aa).

The disordered stretch occupies residues 1 to 29; the sequence is MSHSIPITSSPPPALKKLKLPNGSEEPSE. Zn(2+) is bound by residues cysteine 942, cysteine 945, cysteine 958, and cysteine 961. A CysA-type zinc finger spans residues 942–961; it reads CVSCRTPLKKDNLGALCPNC. [4Fe-4S] cluster-binding residues include cysteine 992, cysteine 995, cysteine 1005, and cysteine 1010. A CysB motif motif is present at residues 992–1010; that stretch reads CQRCQGSLHQEVLCSNKDC.

It belongs to the DNA polymerase type-B family. In terms of assembly, heterodimer with subunits of 125 kDa and 50 kDa. The 125 kDa subunit contains the polymerase active site and most likely the active site for the 3'-5' exonuclease activity. It depends on [4Fe-4S] cluster as a cofactor.

The protein localises to the nucleus. The enzyme catalyses DNA(n) + a 2'-deoxyribonucleoside 5'-triphosphate = DNA(n+1) + diphosphate. Its function is as follows. This polymerase possesses two enzymatic activities: DNA synthesis (polymerase) and an exonucleolytic activity that degrades single-stranded DNA in the 3'- to 5'-direction. The sequence is that of DNA polymerase delta catalytic subunit (POL3) from Candida albicans (Yeast).